A 523-amino-acid chain; its full sequence is Translation initiation factor eIF2B subunit delta (523 aa).

The segment at 1 to 154 is disordered; it reads MAAVAVAVRE…EHTQADDPTL (154 aa). Ala2 carries the post-translational modification N-acetylalanine. Ser12 is modified (phosphoserine). Residues 31–40 are compositionally biased toward basic and acidic residues; that stretch reads MTQEEKLQLR. The segment covering 41-51 has biased composition (basic residues); the sequence is KEKKQQKKKRK. Residue Thr85 is modified to Phosphothreonine. A compositionally biased stretch (basic and acidic residues) spans 95 to 120; it reads TKAELRAERRAKQEAERALKQARKGE. Position 129 is a phosphoserine (Ser129). The interval 170–179 is may bind the chemical integrated stress response (ISR) inhibitor ISRIB; sequence RKDYGSKVSL.

This sequence belongs to the eIF-2B alpha/beta/delta subunits family. In terms of assembly, component of the translation initiation factor 2B (eIF2B) complex which is a heterodecamer of two sets of five different subunits: alpha, beta, gamma, delta and epsilon. Subunits alpha, beta and delta comprise a regulatory subcomplex and subunits epsilon and gamma comprise a catalytic subcomplex. Within the complex, the hexameric regulatory complex resides at the center, with the two heterodimeric catalytic subcomplexes bound on opposite sides.

It localises to the cytoplasm. The protein resides in the cytosol. With respect to regulation, activated by the chemical integrated stress response (ISR) inhibitor ISRIB which stimulates guanine nucleotide exchange factor activity for both phosphorylated and unphosphorylated eIF2. Functionally, acts as a component of the translation initiation factor 2B (eIF2B) complex, which catalyzes the exchange of GDP for GTP on eukaryotic initiation factor 2 (eIF2) gamma subunit. Its guanine nucleotide exchange factor activity is repressed when bound to eIF2 complex phosphorylated on the alpha subunit, thereby limiting the amount of methionyl-initiator methionine tRNA available to the ribosome and consequently global translation is repressed. This is Translation initiation factor eIF2B subunit delta (EIF2B4) from Oryctolagus cuniculus (Rabbit).